The chain runs to 669 residues: Protein fem-1 homolog A (669 aa).

ANK repeat units follow at residues 2-31, 40-70, 82-111, 115-145, 149-178, 182-211, and 214-243; these read DLRTAVYNAARDGKLQLLQKLLSGRSREEL, GGGTPLLIAARYGHLDVVEYLVDRCGASVEA, EGAPPLWAASAAGHLDVVRSLLRRGASVNR, TNSTPLRAACFDGHLEVVRYLVGEHQADLEV, HGHTCLMISCYKGHREIARYLLEQGAQVNR, KGNTALHDCAESGSLEILQLLLGCKARMER, and YGMTPLLAASVTGHTNIVEYLIQEQPGQEQ. Ser-108 carries the post-translational modification Phosphoserine. Residues 240–278 form a disordered region; it reads GQEQVAGGEAQPGLPQEDPSTSQGCAQPQGAPCCSSSPE. 2 TPR repeats span residues 298–332 and 390–423; these read VEALELLGATYVDKKRDLLGALKHWRRAMELRHQG and SYYIRYRGAVYADSGNFERCIRLWKYALDMQQSN. 2 ANK repeats span residues 534–576 and 580–609; these read NGFT…DPDS and DNNTPLHIAAQNNCPAIMNALIEAGAHMDA.

Belongs to the fem-1 family. In terms of assembly, component of a CRL2 E3 ubiquitin-protein ligase complex, also named ECS (Elongin BC-CUL2/5-SOCS-box protein) complex, composed of CUL2, Elongin BC (ELOB and ELOC), RBX1 and substrate-specific adapter FEM1A. Interacts with PTGER4. Interacts with NFKB1; the interaction is direct. Post-translationally, phosphorylated; highly phosphorylated in myoblasts and myotubes. Phosphorylation at Ser-108 promotes PGE2-EP4-mediated inhibition of inflammation. Dephosphorylated by protein phosphatase 2A (PP2A). Present in macrophages derived from peripheral blood monocytes. Also present in atheromata (at protein level).

The protein localises to the mitochondrion. It localises to the cytoplasm. Its pathway is protein modification; protein ubiquitination. Its function is as follows. Substrate-recognition component of a Cul2-RING (CRL2) E3 ubiquitin-protein ligase complex of the DesCEND (destruction via C-end degrons) pathway, which recognizes a C-degron located at the extreme C terminus of target proteins, leading to their ubiquitination and degradation. The C-degron recognized by the DesCEND pathway is usually a motif of less than ten residues and can be present in full-length proteins, truncated proteins or proteolytically cleaved forms. The CRL2(FEM1A) complex specifically recognizes proteins with an arginine at the C-terminus: recognizes and binds proteins ending with -Lys/Arg-Xaa-Arg and -Lys/Arg-Xaa-Xaa-Arg C-degrons, such as SIL1 or OR51B2, leading to their ubiquitination and degradation. Promotes ubiquitination and degradation of SLBP. Involved in PGE2-EP4-mediated inhibition of inflammation of macrophages via interaction with NFKB1 and PTGER4. Promotes inflammation in brain microglia through MAP2K4/MKK4-mediated signaling. The sequence is that of Protein fem-1 homolog A from Homo sapiens (Human).